We begin with the raw amino-acid sequence, 390 residues long: Nicotinate phosphoribosyltransferase (390 aa).

A Phosphohistidine; by autocatalysis modification is found at His-211.

The protein belongs to the NAPRTase family. Transiently phosphorylated on a His residue during the reaction cycle. Phosphorylation strongly increases the affinity for substrates and increases the rate of nicotinate D-ribonucleotide production. Dephosphorylation regenerates the low-affinity form of the enzyme, leading to product release.

It carries out the reaction nicotinate + 5-phospho-alpha-D-ribose 1-diphosphate + ATP + H2O = nicotinate beta-D-ribonucleotide + ADP + phosphate + diphosphate. Its pathway is cofactor biosynthesis; NAD(+) biosynthesis; nicotinate D-ribonucleotide from nicotinate: step 1/1. Its function is as follows. Catalyzes the synthesis of beta-nicotinate D-ribonucleotide from nicotinate and 5-phospho-D-ribose 1-phosphate at the expense of ATP. The polypeptide is Nicotinate phosphoribosyltransferase (Chromohalobacter salexigens (strain ATCC BAA-138 / DSM 3043 / CIP 106854 / NCIMB 13768 / 1H11)).